A 348-amino-acid chain; its full sequence is Phospho-2-dehydro-3-deoxyheptonate aldolase, Trp-sensitive (348 aa).

Belongs to the class-I DAHP synthase family.

The enzyme catalyses D-erythrose 4-phosphate + phosphoenolpyruvate + H2O = 7-phospho-2-dehydro-3-deoxy-D-arabino-heptonate + phosphate. Its pathway is metabolic intermediate biosynthesis; chorismate biosynthesis; chorismate from D-erythrose 4-phosphate and phosphoenolpyruvate: step 1/7. Its function is as follows. Stereospecific condensation of phosphoenolpyruvate (PEP) and D-erythrose-4-phosphate (E4P) giving rise to 3-deoxy-D-arabino-heptulosonate-7-phosphate (DAHP). The sequence is that of Phospho-2-dehydro-3-deoxyheptonate aldolase, Trp-sensitive (aroH) from Shigella flexneri.